The sequence spans 272 residues: Ribosomal RNA small subunit methyltransferase A (272 aa).

S-adenosyl-L-methionine is bound by residues His13, Leu15, Gly40, Glu61, Asp85, and Asn105.

Belongs to the class I-like SAM-binding methyltransferase superfamily. rRNA adenine N(6)-methyltransferase family. RsmA subfamily.

It is found in the cytoplasm. The catalysed reaction is adenosine(1518)/adenosine(1519) in 16S rRNA + 4 S-adenosyl-L-methionine = N(6)-dimethyladenosine(1518)/N(6)-dimethyladenosine(1519) in 16S rRNA + 4 S-adenosyl-L-homocysteine + 4 H(+). Specifically dimethylates two adjacent adenosines (A1518 and A1519) in the loop of a conserved hairpin near the 3'-end of 16S rRNA in the 30S particle. May play a critical role in biogenesis of 30S subunits. The sequence is that of Ribosomal RNA small subunit methyltransferase A from Bacteroides fragilis (strain ATCC 25285 / DSM 2151 / CCUG 4856 / JCM 11019 / LMG 10263 / NCTC 9343 / Onslow / VPI 2553 / EN-2).